Reading from the N-terminus, the 214-residue chain is Cell division protein SepF (214 aa).

The interval Tyr-23–Tyr-70 is disordered. The segment covering Pro-36–Ala-58 has biased composition (basic and acidic residues).

Belongs to the SepF family. As to quaternary structure, homodimer. Interacts with FtsZ.

It is found in the cytoplasm. Its function is as follows. Cell division protein that is part of the divisome complex and is recruited early to the Z-ring. Probably stimulates Z-ring formation, perhaps through the cross-linking of FtsZ protofilaments. Its function overlaps with FtsA. The chain is Cell division protein SepF from Mycobacterium avium (strain 104).